We begin with the raw amino-acid sequence, 454 residues long: Guanine deaminase (454 aa).

Residues His-82 and His-84 each coordinate Zn(2+). Substrate contacts are provided by residues His-84 to Gln-87, Arg-213 to Phe-214, His-240 to Glu-243, and Asp-330. Zn(2+) contacts are provided by His-240 and Asp-330. Phosphoserine is present on Ser-453.

This sequence belongs to the metallo-dependent hydrolases superfamily. ATZ/TRZ family. In terms of assembly, homodimer. Zn(2+) is required as a cofactor.

It catalyses the reaction guanine + H2O + H(+) = xanthine + NH4(+). Its pathway is purine metabolism; guanine degradation; xanthine from guanine: step 1/1. Functionally, catalyzes the hydrolytic deamination of guanine, producing xanthine and ammonia. The sequence is that of Guanine deaminase from Homo sapiens (Human).